The primary structure comprises 357 residues: Protein RecA (357 aa).

67-74 (GPESSGKT) is a binding site for ATP. The segment at 335–357 (LASSASDDESTEGNIDLETGEIF) is disordered.

It belongs to the RecA family.

It is found in the cytoplasm. In terms of biological role, can catalyze the hydrolysis of ATP in the presence of single-stranded DNA, the ATP-dependent uptake of single-stranded DNA by duplex DNA, and the ATP-dependent hybridization of homologous single-stranded DNAs. It interacts with LexA causing its activation and leading to its autocatalytic cleavage. This is Protein RecA from Shewanella putrefaciens (strain CN-32 / ATCC BAA-453).